Consider the following 59-residue polypeptide: Large ribosomal subunit protein bL32 (59 aa).

The interval 1 to 34 (MAVQKSKVTRSRRGQRRSHDALTGPTLSVDKTTG) is disordered. Basic residues predominate over residues 7-16 (KVTRSRRGQR).

Belongs to the bacterial ribosomal protein bL32 family.

In Marinomonas sp. (strain MWYL1), this protein is Large ribosomal subunit protein bL32.